Reading from the N-terminus, the 552-residue chain is Chaperonin GroEL (552 aa).

ATP-binding positions include 30–33 (TLGP), lysine 51, 87–91 (DGTTT), glycine 415, 479–481 (NAA), and aspartate 495.

This sequence belongs to the chaperonin (HSP60) family. In terms of assembly, forms a cylinder of 14 subunits composed of two heptameric rings stacked back-to-back. Interacts with the co-chaperonin GroES.

The protein resides in the cytoplasm. The catalysed reaction is ATP + H2O + a folded polypeptide = ADP + phosphate + an unfolded polypeptide.. Functionally, together with its co-chaperonin GroES, plays an essential role in assisting protein folding. The GroEL-GroES system forms a nano-cage that allows encapsulation of the non-native substrate proteins and provides a physical environment optimized to promote and accelerate protein folding. This chain is Chaperonin GroEL, found in Nitrosospira multiformis (strain ATCC 25196 / NCIMB 11849 / C 71).